Reading from the N-terminus, the 711-residue chain is DNA topoisomerase 3 (711 aa).

The 134-residue stretch at 2 to 135 (KSLILAEKPS…IKRLWISSVT (134 aa)) folds into the Toprim domain. 2 residues coordinate Mg(2+): Glu-8 and Asp-104. Residues 152–580 (FQHLYEAALA…EMKAFTQSIV (429 aa)) form the Topo IA-type catalytic domain. Positions 186–191 (SLGRVQ) are interaction with DNA. Residue Tyr-305 is the O-(5'-phospho-DNA)-tyrosine intermediate of the active site. The interval 672–699 (KRFKNKSSGKVSKKEMKKYMNNEDSLEN) is disordered. A compositionally biased stretch (basic and acidic residues) spans 683–692 (SKKEMKKYMN).

This sequence belongs to the type IA topoisomerase family. Mg(2+) serves as cofactor.

The enzyme catalyses ATP-independent breakage of single-stranded DNA, followed by passage and rejoining.. Releases the supercoiling and torsional tension of DNA, which is introduced during the DNA replication and transcription, by transiently cleaving and rejoining one strand of the DNA duplex. Introduces a single-strand break via transesterification at a target site in duplex DNA. The scissile phosphodiester is attacked by the catalytic tyrosine of the enzyme, resulting in the formation of a DNA-(5'-phosphotyrosyl)-enzyme intermediate and the expulsion of a 3'-OH DNA strand. The free DNA strand then undergoes passage around the unbroken strand, thus removing DNA supercoils. Finally, in the religation step, the DNA 3'-OH attacks the covalent intermediate to expel the active-site tyrosine and restore the DNA phosphodiester backbone. The sequence is that of DNA topoisomerase 3 from Staphylococcus haemolyticus (strain JCSC1435).